A 377-amino-acid polypeptide reads, in one-letter code: 6-oxocyclohex-1-ene-1-carbonyl-CoA hydrolase (377 aa).

The protein belongs to the enoyl-CoA hydratase/isomerase family. As to quaternary structure, homotetramer.

The catalysed reaction is 6-oxocyclohex-1-ene-1-carbonyl-CoA + 2 H2O = 3-hydroxy-6-carboxyhexanoyl-CoA + H(+). It functions in the pathway aromatic compound metabolism; benzoyl-CoA degradation. Its function is as follows. Involved in the central benzoyl-CoA catabolism. Catalyzes the addition of one molecule of water to the double bond and the hydrolytic cleavage of C-C bond in the alicyclic ring, 6-oxocyclohex-1-ene-1-carbonyl-CoA (6-OCH-CoA) to yield 3-hydroxypimelyl-CoA. This is 6-oxocyclohex-1-ene-1-carbonyl-CoA hydrolase (oah) from Thauera aromatica.